Consider the following 79-residue polypeptide: D-alanyl carrier protein (79 aa).

A Carrier domain is found at 1–76; that stretch reads MEEQVLSLLE…RVMAYVKKRV (76 aa). Serine 34 carries the O-(pantetheine 4'-phosphoryl)serine modification.

This sequence belongs to the DltC family. In terms of processing, 4'-phosphopantetheine is transferred from CoA to a specific serine of apo-DCP.

The protein localises to the cytoplasm. It functions in the pathway cell wall biogenesis; lipoteichoic acid biosynthesis. Functionally, carrier protein involved in the D-alanylation of lipoteichoic acid (LTA). The loading of thioester-linked D-alanine onto DltC is catalyzed by D-alanine--D-alanyl carrier protein ligase DltA. The DltC-carried D-alanyl group is further transferred to cell membrane phosphatidylglycerol (PG) by forming an ester bond, probably catalyzed by DltD. D-alanylation of LTA plays an important role in modulating the properties of the cell wall in Gram-positive bacteria, influencing the net charge of the cell wall. The protein is D-alanyl carrier protein of Abiotrophia defectiva (Streptococcus defectivus).